The primary structure comprises 327 residues: Glycerol-3-phosphate dehydrogenase [NAD(P)+] (327 aa).

Tryptophan 11, histidine 30, and lysine 103 together coordinate NADPH. Sn-glycerol 3-phosphate contacts are provided by lysine 103, glycine 131, and serine 133. Alanine 135 is a binding site for NADPH. The sn-glycerol 3-phosphate site is built by lysine 186, aspartate 243, serine 253, arginine 254, and asparagine 255. The Proton acceptor role is filled by lysine 186. Arginine 254 lines the NADPH pocket. Valine 281 and glutamate 283 together coordinate NADPH.

Belongs to the NAD-dependent glycerol-3-phosphate dehydrogenase family.

The protein localises to the cytoplasm. It catalyses the reaction sn-glycerol 3-phosphate + NAD(+) = dihydroxyacetone phosphate + NADH + H(+). The enzyme catalyses sn-glycerol 3-phosphate + NADP(+) = dihydroxyacetone phosphate + NADPH + H(+). It participates in membrane lipid metabolism; glycerophospholipid metabolism. Catalyzes the reduction of the glycolytic intermediate dihydroxyacetone phosphate (DHAP) to sn-glycerol 3-phosphate (G3P), the key precursor for phospholipid synthesis. The chain is Glycerol-3-phosphate dehydrogenase [NAD(P)+] from Wolbachia pipientis wMel.